A 366-amino-acid chain; its full sequence is Acetylserotonin O-methyltransferase 2 (366 aa).

Glycine 209, aspartate 232, aspartate 253, and lysine 267 together coordinate S-adenosyl-L-homocysteine. Catalysis depends on histidine 271, which acts as the Proton acceptor. Active-site residues include glutamate 302 and glutamate 332.

Belongs to the class I-like SAM-binding methyltransferase superfamily. Cation-independent O-methyltransferase family. As to quaternary structure, homodimer. As to expression, expressed in roots, leaves, stems and flowers.

Its subcellular location is the cytoplasm. It carries out the reaction N-acetylserotonin + S-adenosyl-L-methionine = melatonin + S-adenosyl-L-homocysteine + H(+). Its pathway is aromatic compound metabolism; melatonin biosynthesis; melatonin from serotonin: step 1/2. Its function is as follows. Methyltransferase which catalyzes the transfer of a methyl group onto N-acetylserotonin, producing melatonin (N-acetyl-5-methoxytryptamine). The protein is Acetylserotonin O-methyltransferase 2 of Oryza sativa subsp. japonica (Rice).